The sequence spans 465 residues: ATP synthase subunit beta (465 aa).

Residue 148–155 participates in ATP binding; sequence GGAGVGKT.

It belongs to the ATPase alpha/beta chains family. In terms of assembly, F-type ATPases have 2 components, CF(1) - the catalytic core - and CF(0) - the membrane proton channel. CF(1) has five subunits: alpha(3), beta(3), gamma(1), delta(1), epsilon(1). CF(0) has three main subunits: a(1), b(2) and c(9-12). The alpha and beta chains form an alternating ring which encloses part of the gamma chain. CF(1) is attached to CF(0) by a central stalk formed by the gamma and epsilon chains, while a peripheral stalk is formed by the delta and b chains.

The protein localises to the cell inner membrane. The catalysed reaction is ATP + H2O + 4 H(+)(in) = ADP + phosphate + 5 H(+)(out). Its function is as follows. Produces ATP from ADP in the presence of a proton gradient across the membrane. The catalytic sites are hosted primarily by the beta subunits. This chain is ATP synthase subunit beta, found in Neisseria meningitidis serogroup A / serotype 4A (strain DSM 15465 / Z2491).